The sequence spans 390 residues: Succinate--CoA ligase [ADP-forming] subunit beta (390 aa).

One can recognise an ATP-grasp domain in the interval 9 to 245; the sequence is KHLLKKYNIP…TTQEDEHETM (237 aa). Residues Lys46, 53–55, Glu99, Ser102, and Glu107 each bind ATP; that span reads GRG. Residues Asn200 and Asp214 each contribute to the Mg(2+) site. Substrate-binding positions include Asn265 and 322 to 324; that span reads GIV.

It belongs to the succinate/malate CoA ligase beta subunit family. In terms of assembly, heterotetramer of two alpha and two beta subunits. Requires Mg(2+) as cofactor.

It catalyses the reaction succinate + ATP + CoA = succinyl-CoA + ADP + phosphate. It carries out the reaction GTP + succinate + CoA = succinyl-CoA + GDP + phosphate. It participates in carbohydrate metabolism; tricarboxylic acid cycle; succinate from succinyl-CoA (ligase route): step 1/1. Succinyl-CoA synthetase functions in the citric acid cycle (TCA), coupling the hydrolysis of succinyl-CoA to the synthesis of either ATP or GTP and thus represents the only step of substrate-level phosphorylation in the TCA. The beta subunit provides nucleotide specificity of the enzyme and binds the substrate succinate, while the binding sites for coenzyme A and phosphate are found in the alpha subunit. In Coxiella burnetii (strain CbuG_Q212) (Coxiella burnetii (strain Q212)), this protein is Succinate--CoA ligase [ADP-forming] subunit beta.